The sequence spans 291 residues: Phosphate import ATP-binding protein PstB (291 aa).

Residues 44–286 form the ABC transporter domain; it reads VKAREVNVFY…PEEKRTQDYI (243 aa). ATP is bound at residue 76–83; it reads GPSGCGKS.

This sequence belongs to the ABC transporter superfamily. Phosphate importer (TC 3.A.1.7) family. In terms of assembly, the complex is composed of two ATP-binding proteins (PstB), two transmembrane proteins (PstC and PstA) and a solute-binding protein (PstS).

Its subcellular location is the cell inner membrane. The enzyme catalyses phosphate(out) + ATP + H2O = ADP + 2 phosphate(in) + H(+). In terms of biological role, part of the ABC transporter complex PstSACB involved in phosphate import. Responsible for energy coupling to the transport system. This is Phosphate import ATP-binding protein PstB from Chelativorans sp. (strain BNC1).